A 281-amino-acid chain; its full sequence is Para-Rep C1 (281 aa).

One can recognise a CRESS-DNA virus Rep endonuclease domain in the interval 3 to 97 (TLQGTFWCFT…VAGPWTYGEL (95 aa)). An RCR-1 motif is present at residues 10–13 (CFTL). A divalent metal cation is bound by residues Glu-36 and His-42. An RCR-2 motif is present at residues 42–44 (HLQ). Positions 51-71 (KRSTLKMMKELLPGAHLEVSK) match the Nuclear localization signal motif. Tyr-80 acts as the For DNA cleavage activity in catalysis. Positions 80–83 (YAMK) match the RCR-3 motif. Residue Glu-85 coordinates a divalent metal cation. Positions 97-103 (LLKKGSN) match the Nuclear localization signal motif. 173–181 (GPQGGEGKT) is an ATP binding site.

This sequence belongs to the nanoviridea/circoviridae replication-associated protein family. Homooligomer (Potential). Rep binds to repeated DNA motifs (iterons). Mg(2+) is required as a cofactor. It depends on Mn(2+) as a cofactor.

The protein resides in the host nucleus. It catalyses the reaction ATP + H2O = ADP + phosphate + H(+). Initiates and terminates the replication only of its own subviral DNA molecule. The closed circular ssDNA genome is first converted to a superhelical dsDNA. Rep binds a specific hairpin at the genome origin of replication. Introduces an endonucleolytic nick within the intergenic region of the genome, thereby initiating the rolling circle replication (RCR). Following cleavage, binds covalently to the 5'-phosphate of DNA as a tyrosyl ester. The cleavage gives rise to a free 3'-OH that serves as a primer for the cellular DNA polymerase. The polymerase synthesizes the (+) strand DNA by rolling circle mechanism. After one round of replication, a Rep-catalyzed nucleotidyl transfer reaction releases a circular single-stranded virus genome, thereby terminating the replication. Displays origin-specific DNA cleavage, nucleotidyl transferase, ATPase and helicase activities. The protein is Para-Rep C1 (C1) of Milk vetch dwarf C1 alphasatellite (MVDC1A).